A 193-amino-acid polypeptide reads, in one-letter code: 7-methyl-GTP pyrophosphatase (193 aa).

The Proton acceptor role is filled by aspartate 69.

It belongs to the Maf family. YceF subfamily. Requires a divalent metal cation as cofactor.

It is found in the cytoplasm. The catalysed reaction is N(7)-methyl-GTP + H2O = N(7)-methyl-GMP + diphosphate + H(+). In terms of biological role, nucleoside triphosphate pyrophosphatase that hydrolyzes 7-methyl-GTP (m(7)GTP). May have a dual role in cell division arrest and in preventing the incorporation of modified nucleotides into cellular nucleic acids. This Chromohalobacter salexigens (strain ATCC BAA-138 / DSM 3043 / CIP 106854 / NCIMB 13768 / 1H11) protein is 7-methyl-GTP pyrophosphatase.